A 330-amino-acid chain; its full sequence is NADH-quinone oxidoreductase subunit H (330 aa).

8 consecutive transmembrane segments (helical) span residues 3-23 (AAFV…FSAL), 76-96 (PVFM…MAAI), 118-138 (VGLL…LLAG), 161-181 (EVVT…ISLV), 188-208 (AGGM…LFLI), 244-264 (FFIG…LIFL), 272-292 (FIPG…LFLW), and 307-327 (WLCW…TGIV).

The protein belongs to the complex I subunit 1 family. In terms of assembly, NDH-1 is composed of 14 different subunits. Subunits NuoA, H, J, K, L, M, N constitute the membrane sector of the complex.

The protein resides in the cell inner membrane. The catalysed reaction is a quinone + NADH + 5 H(+)(in) = a quinol + NAD(+) + 4 H(+)(out). Its function is as follows. NDH-1 shuttles electrons from NADH, via FMN and iron-sulfur (Fe-S) centers, to quinones in the respiratory chain. The immediate electron acceptor for the enzyme in this species is believed to be ubiquinone. Couples the redox reaction to proton translocation (for every two electrons transferred, four hydrogen ions are translocated across the cytoplasmic membrane), and thus conserves the redox energy in a proton gradient. This subunit may bind ubiquinone. The chain is NADH-quinone oxidoreductase subunit H from Nitratiruptor sp. (strain SB155-2).